Consider the following 444-residue polypeptide: Jacalin-related lectin 11 (444 aa).

N-acetylalanine is present on Ala-2. Jacalin-type lectin domains are found at residues 2–143 (ALKV…YFIK), 146–290 (SIQS…YYAP), and 298–442 (PEKL…HVTA).

This sequence belongs to the jacalin lectin family.

In Arabidopsis thaliana (Mouse-ear cress), this protein is Jacalin-related lectin 11 (JAL11).